Consider the following 397-residue polypeptide: MNIIKGNIASPLGFSADGLHAGFKKKKLDFGWIVSEVPANVAGVFTTNKVIAAPLKLTKNSIEKSGKMQAIVVNSGIANSCTGKQGEKDAFKMQQLAANKLQIQPEYVGVASTGVIGKVMPMSILKNGFSKLVKNGNADDFAKAILTTDTHTKTCVVNEEFGSDTVTMAGVAKGSGMIHPNLATMLAFITCDANISSQTLQQALKDVVEVTFNQITVDGDTSTNDMVLVMSNGCTNNNEIKKDSEDYYKFKQMLLYIMTDLAKSIARDGEGASKLIEVTVKGAKESSAARMIAKSVVGSSLVKTAIFGEDPNWGRIIAAAGYAKTYFDINQVDIFIGRIPVLIRSSPVKYDKEEIQEIMSAEEISIQLDLHQGNCEGQAWGCDLSYDYVKINALYTT.

Residues threonine 147, lysine 173, threonine 184, glutamate 270, asparagine 392, and threonine 397 each contribute to the substrate site. Threonine 184 acts as the Nucleophile in catalysis.

It belongs to the ArgJ family. In terms of assembly, heterotetramer of two alpha and two beta chains.

It localises to the cytoplasm. The enzyme catalyses N(2)-acetyl-L-ornithine + L-glutamate = N-acetyl-L-glutamate + L-ornithine. The catalysed reaction is L-glutamate + acetyl-CoA = N-acetyl-L-glutamate + CoA + H(+). It functions in the pathway amino-acid biosynthesis; L-arginine biosynthesis; L-ornithine and N-acetyl-L-glutamate from L-glutamate and N(2)-acetyl-L-ornithine (cyclic): step 1/1. It participates in amino-acid biosynthesis; L-arginine biosynthesis; N(2)-acetyl-L-ornithine from L-glutamate: step 1/4. Its function is as follows. Catalyzes two activities which are involved in the cyclic version of arginine biosynthesis: the synthesis of N-acetylglutamate from glutamate and acetyl-CoA as the acetyl donor, and of ornithine by transacetylation between N(2)-acetylornithine and glutamate. The chain is Arginine biosynthesis bifunctional protein ArgJ from Staphylococcus epidermidis (strain ATCC 35984 / DSM 28319 / BCRC 17069 / CCUG 31568 / BM 3577 / RP62A).